The primary structure comprises 141 residues: MTEMDRISISLPSKLLREFDEIIAERGYASRSEAIRDAIRDYIIKHKWIHSLEGERAGSISVIYNHHASDVMEKITEIQHNYTDIIVATLHLHLDHDHCLETILVRGDAKRIRELTDRLTALKGVKQVKLSVMVPGGQIPE.

Positions 80, 91, 93, and 99 each coordinate Ni(2+).

The protein belongs to the transcriptional regulatory CopG/NikR family. As to quaternary structure, homotetramer. The cofactor is Ni(2+).

In terms of biological role, transcriptional regulator. The chain is Putative nickel-responsive regulator from Methanocaldococcus jannaschii (strain ATCC 43067 / DSM 2661 / JAL-1 / JCM 10045 / NBRC 100440) (Methanococcus jannaschii).